Consider the following 807-residue polypeptide: Spondin-1 (807 aa).

An N-terminal signal peptide occupies residues 1 to 28 (MRLSPVSLRLSRGPALLALALPLAAALA). Residues 29–194 (FSDETLDKVT…DPTLDGVTDR (166 aa)) enclose the Reelin domain. Intrachain disulfides connect Cys44–Cys128, Cys156–Cys182, Cys199–Cys336, Cys200–Cys340, Cys202–Cys415, Cys443–Cys480, Cys454–Cys489, Cys459–Cys494, Cys502–Cys538, Cys513–Cys517, Cys548–Cys554, Cys559–Cys595, Cys570–Cys574, Cys605–Cys610, Cys615–Cys650, Cys626–Cys630, and Cys660–Cys665. One can recognise a Spondin domain in the interval 195 to 388 (PILDCCACGT…LTSLDHPQSP (194 aa)). The N-linked (GlcNAc...) asparagine glycan is linked to Asn214. Residues Asp325, Asp354, and Asp358 each contribute to the Ca(2+) site. TSP type-1 domains lie at 442-495 (TCIY…PGCS), 501-555 (TCTM…EECS), 558-611 (SCLV…PECH), 614-666 (PCLL…PECP), and 668-721 (DCEL…RKCL). A glycan (N-linked (GlcNAc...) asparagine) is linked at Asn681. The span at 732-746 (REARESRRSEQLREE) shows a compositional bias: basic and acidic residues. The tract at residues 732–752 (REARESRRSEQLREESDGEQF) is disordered. In terms of domain architecture, TSP type-1 6 spans 754-806 (GCRMRPWTAWSECTKLCGGGIQERYMTVKKRFKSSQFTSCKDKKEIRACNVHP).

In terms of assembly, binds to the central extracellular domain of APP and inhibits beta-secretase cleavage of APP.

It localises to the secreted. The protein resides in the extracellular space. It is found in the extracellular matrix. Functionally, cell adhesion protein that promotes the attachment of spinal cord and sensory neuron cells and the outgrowth of neurites in vitro. May contribute to the growth and guidance of axons in both the spinal cord and the PNS. This Mus musculus (Mouse) protein is Spondin-1 (Spon1).